Here is a 321-residue protein sequence, read N- to C-terminus: Phosphopantothenate--cysteine ligase 1 (321 aa).

This sequence belongs to the PPC synthetase family. Homodimer.

The catalysed reaction is (R)-4'-phosphopantothenate + L-cysteine + CTP = N-[(R)-4-phosphopantothenoyl]-L-cysteine + CMP + diphosphate + H(+). It participates in cofactor biosynthesis; coenzyme A biosynthesis; CoA from (R)-pantothenate: step 2/5. In terms of biological role, catalyzes the first step in the biosynthesis of coenzyme A from vitamin B5, where cysteine is conjugated to 4'-phosphopantothenate to form 4-phosphopantothenoylcysteine. In Oryza sativa subsp. japonica (Rice), this protein is Phosphopantothenate--cysteine ligase 1.